A 387-amino-acid chain; its full sequence is Cobalt-precorrin-5B C(1)-methyltransferase (387 aa).

The protein belongs to the CbiD family.

It carries out the reaction Co-precorrin-5B + S-adenosyl-L-methionine = Co-precorrin-6A + S-adenosyl-L-homocysteine. It functions in the pathway cofactor biosynthesis; adenosylcobalamin biosynthesis; cob(II)yrinate a,c-diamide from sirohydrochlorin (anaerobic route): step 6/10. Catalyzes the methylation of C-1 in cobalt-precorrin-5B to form cobalt-precorrin-6A. The sequence is that of Cobalt-precorrin-5B C(1)-methyltransferase from Desulfitobacterium hafniense (strain Y51).